The primary structure comprises 94 residues: Putative testis-specific prion protein (94 aa).

A signal peptide spans 1-18 (MQHSLVFFFAVILHLSHL). Asn-44 carries N-linked (GlcNAc...) asparagine glycosylation.

In terms of tissue distribution, specifically expressed in adult testis.

Its subcellular location is the secreted. This Homo sapiens (Human) protein is Putative testis-specific prion protein (PRNT).